The following is a 94-amino-acid chain: Small ribosomal subunit protein uS19 (94 aa).

The protein belongs to the universal ribosomal protein uS19 family.

Protein S19 forms a complex with S13 that binds strongly to the 16S ribosomal RNA. The sequence is that of Small ribosomal subunit protein uS19 from Carboxydothermus hydrogenoformans (strain ATCC BAA-161 / DSM 6008 / Z-2901).